A 135-amino-acid polypeptide reads, in one-letter code: MRVGALDVGEARIGLAVGEEGVPLASGRGYLVRKTLEEDVEALLDFVRREGLGKLVVGLPLRTDLKESAQAGKVLPLVEALRARGVEVELWDERFTTKLAQERLKHAPKRLRRDKGKLDELAAVVLLEDYLARGI.

Belongs to the YqgF nuclease family.

Its subcellular location is the cytoplasm. Could be a nuclease involved in processing of the 5'-end of pre-16S rRNA. The sequence is that of Putative pre-16S rRNA nuclease from Thermus thermophilus (strain ATCC 27634 / DSM 579 / HB8).